The primary structure comprises 93 residues: ATP synthase subunit c (93 aa).

2 helical membrane-spanning segments follow: residues 13 to 33 and 58 to 78; these read AIGV…GMGI and ISLA…FILL.

The protein belongs to the ATPase C chain family. As to quaternary structure, F-type ATPases have 2 components, F(1) - the catalytic core - and F(0) - the membrane proton channel. F(1) has five subunits: alpha(3), beta(3), gamma(1), delta(1), epsilon(1). F(0) has three main subunits: a(1), b(2) and c(10-14). The alpha and beta chains form an alternating ring which encloses part of the gamma chain. F(1) is attached to F(0) by a central stalk formed by the gamma and epsilon chains, while a peripheral stalk is formed by the delta and b chains.

The protein resides in the cell inner membrane. F(1)F(0) ATP synthase produces ATP from ADP in the presence of a proton or sodium gradient. F-type ATPases consist of two structural domains, F(1) containing the extramembraneous catalytic core and F(0) containing the membrane proton channel, linked together by a central stalk and a peripheral stalk. During catalysis, ATP synthesis in the catalytic domain of F(1) is coupled via a rotary mechanism of the central stalk subunits to proton translocation. Functionally, key component of the F(0) channel; it plays a direct role in translocation across the membrane. A homomeric c-ring of between 10-14 subunits forms the central stalk rotor element with the F(1) delta and epsilon subunits. The chain is ATP synthase subunit c from Campylobacter hominis (strain ATCC BAA-381 / DSM 21671 / CCUG 45161 / LMG 19568 / NCTC 13146 / CH001A).